Consider the following 351-residue polypeptide: E3 ubiquitin-protein ligase TRIM63 (351 aa).

The segment at 23-79 adopts an RING-type zinc-finger fold; that stretch reads CPICLEMFTKPVVILPCQHNLCRKCANDIFQAANPYWTNRGGSVSMSGGRFRCPSCR. The segment at 74–218 is interaction with TTN; it reads RCPSCRHEVI…LSHKFDALYA (145 aa). The B box-type zinc-finger motif lies at 117–159; it reads GSHPMCKEHEDEKINIYCLTCEVPTCSLCKVFGAHQACEVAPL. Zn(2+) is bound by residues C122, H125, C145, and H151. A coiled-coil region spans residues 189 to 269; it reads SQLEDSCRVT…VETAIQSLDE (81 aa). The COS domain occupies 267 to 325; the sequence is LDEPGGATFLLSAKPLIKSIVEASKGCQLGKTEQGFENMDYFTLNLEHIAEALRAIDFG. The segment covering 326–345 has biased composition (acidic residues); sequence TDEEEEFTEEEEEEDQEEGV. Residues 326 to 351 are disordered; that stretch reads TDEEEEFTEEEEEEDQEEGVSTEGHQ.

In terms of assembly, homodimer. Homooligomer and heterooligomer. Interacts with SUMO2, titin/TTN and GMEB1. Interacts with TRIM54 and probably with TRIM55 and TNNI3. Forms a ternary complex with RACK1 and PRKCE. Interacts with CKM. Muscle specific. Selectively expressed in heart and skeletal muscle.

It localises to the cytoplasm. Its subcellular location is the nucleus. The protein resides in the myofibril. It is found in the sarcomere. The protein localises to the m line. It localises to the z line. It carries out the reaction S-ubiquitinyl-[E2 ubiquitin-conjugating enzyme]-L-cysteine + [acceptor protein]-L-lysine = [E2 ubiquitin-conjugating enzyme]-L-cysteine + N(6)-ubiquitinyl-[acceptor protein]-L-lysine.. Its pathway is protein modification; protein ubiquitination. E3 ubiquitin ligase. Mediates the ubiquitination and subsequent proteasomal degradation of CKM, GMEB1 and HIBADH. Regulates the proteasomal degradation of muscle proteins under amino acid starvation, where muscle protein is catabolized to provide other organs with amino acids. Inhibits de novo skeletal muscle protein synthesis under amino acid starvation. Regulates proteasomal degradation of cardiac troponin I/TNNI3 and probably of other sarcomeric-associated proteins. May play a role in striated muscle atrophy and hypertrophy by regulating an anti-hypertrophic PKC-mediated signaling pathway. May regulate the organization of myofibrils through TTN in muscle cells. In Rattus norvegicus (Rat), this protein is E3 ubiquitin-protein ligase TRIM63 (Trim63).